The following is a 156-amino-acid chain: MRIQLIAVGSKMPSWVEQGYQQYVKRFPSDMPLSLTEIPAGKRGKNADIKRILHKEGELTMAAIPKGNRIVTLEVTGKPWDTPMLASNMQKWQMDGRDVSLLIGGPEGLAPECIAASEQKWSLSPLTLPHPLVRIIVAESLYRAWSVNTNHPYHRE.

Residues Leu-73, Gly-104, and 123–128 (LSPLTL) contribute to the S-adenosyl-L-methionine site.

It belongs to the RNA methyltransferase RlmH family. As to quaternary structure, homodimer.

The protein localises to the cytoplasm. It carries out the reaction pseudouridine(1915) in 23S rRNA + S-adenosyl-L-methionine = N(3)-methylpseudouridine(1915) in 23S rRNA + S-adenosyl-L-homocysteine + H(+). Specifically methylates the pseudouridine at position 1915 (m3Psi1915) in 23S rRNA. The chain is Ribosomal RNA large subunit methyltransferase H from Pseudoalteromonas atlantica (strain T6c / ATCC BAA-1087).